The primary structure comprises 161 residues: Urocortin-3 (161 aa).

Positions 1-21 (MLMPVHFLLLLLLLLGGPRTG) are cleaved as a signal peptide. A propeptide spanning residues 22–118 (LPHKFYKAKP…QDTAKSPHRT (97 aa)) is cleaved from the precursor. The segment at 64–118 (SRDASSGEEEEGKEKKTFPISGARGGARGTRYRYVSQAQPRGKPRQDTAKSPHRT) is disordered. Ile157 carries the post-translational modification Isoleucine amide.

It belongs to the sauvagine/corticotropin-releasing factor/urotensin I family. In terms of assembly, binds with high affinity to CRF receptors 2-alpha and 2-beta.

The protein resides in the secreted. Its function is as follows. Suppresses food intake, delays gastric emptying and decreases heat-induced edema. Might represent an endogenous ligand for maintaining homeostasis after stress. In Homo sapiens (Human), this protein is Urocortin-3 (UCN3).